A 445-amino-acid polypeptide reads, in one-letter code: Methyl-CpG-binding domain protein 4-like protein (445 aa).

Asp429 is a catalytic residue.

In terms of tissue distribution, isoform 1 and isoform 4: Expressed in leaves and flowers, but not in roots or stems.

Its subcellular location is the nucleus. Functionally, monofunctional DNA glycosylase targeting U:G and T:G mispairs. Excises uracil derivatives and exhibits a preference for a CpG sequence context, irrespective of the methylation status of the complementary strand. The activity follows a biphasic kinetics, with an initial burst of product accumulation followed by a slower phase. Specifically binds its reaction product. Triggers the base excision repair (BER) pathway. This chain is Methyl-CpG-binding domain protein 4-like protein, found in Arabidopsis thaliana (Mouse-ear cress).